A 332-amino-acid chain; its full sequence is Probable thc operon regulatory protein (332 aa).

Residues 227 to 328 enclose the HTH araC/xylS-type domain; the sequence is RLAVDYLEAH…GVSPSEDLRT (102 aa). DNA-binding regions (H-T-H motif) lie at residues 244–265 and 295–318; these read AQVA…QNSL and VTEI…KQTF.

Functionally, probably involved in the positive regulation of the thc operon for the degradation of the thiocarbamate herbicide EPTC. The polypeptide is Probable thc operon regulatory protein (thcR) (Rhodococcus erythropolis (Arthrobacter picolinophilus)).